The following is a 218-amino-acid chain: Cytochrome c biogenesis ATP-binding export protein CcmA (218 aa).

The 216-residue stretch at 2-217 (LEAKNLTCIR…KSCLSACCAV (216 aa)) folds into the ABC transporter domain. 34–41 (GPNGAGKT) contributes to the ATP binding site.

The protein belongs to the ABC transporter superfamily. CcmA exporter (TC 3.A.1.107) family. In terms of assembly, the complex is composed of two ATP-binding proteins (CcmA) and two transmembrane proteins (CcmB).

Its subcellular location is the cell inner membrane. The enzyme catalyses heme b(in) + ATP + H2O = heme b(out) + ADP + phosphate + H(+). Its function is as follows. Part of the ABC transporter complex CcmAB involved in the biogenesis of c-type cytochromes; once thought to export heme, this seems not to be the case, but its exact role is uncertain. Responsible for energy coupling to the transport system. The chain is Cytochrome c biogenesis ATP-binding export protein CcmA from Yersinia pseudotuberculosis serotype I (strain IP32953).